The following is a 314-amino-acid chain: Short-chain dehydrogenase/reductase drtF (314 aa).

NADP(+) contacts are provided by Val26, Lys50, Asp73, Asn100, Tyr185, and Lys189. Tyr185 (proton acceptor) is an active-site residue. Catalysis depends on Lys189, which acts as the Lowers pKa of active site Tyr.

It belongs to the short-chain dehydrogenases/reductases (SDR) family.

Its pathway is secondary metabolite biosynthesis; terpenoid biosynthesis. Short-chain dehydrogenase/reductase; part of the gene cluster that mediates the biosynthesis of various drimane-type sesquiterpene esters, compounds that exhibit diverse biological activities and are widely present in eukaryotes. The pathway begins with the synthesis of the backbone drimenol by the terpene cyclase drtB using farnesyl pyrophosphate (FPP) as substrate. The cytochrome P450 monooxygenase drtD is then responsible for the hydroxylations at C-6, C-9 and C-12, as well as the oxidation of hydroxyl groups at C-6 and C-11 to a ketone and an aldehyde, respectively. Then, the biosynthesis can go in two directions, either the hydroxylated drimenol is further hydroxylated at C-2 and C-3 by an enzyme(s) not associated with the drt cluster, or the FAD-binding oxidoreductase drtC further oxidizes C-11 or C-12 to form the butyrolactone ring. DrtB, drtD and drtC are solely responsible for the formation of the different drimane structures observed during drimane sesquiterpenes biosynthesis. The polyketide synthase drtA synthesizes different lengths (C6 and C8) of PKS chains, which are then oxidized to varying degrees by the short-chain dehydrogenase drtF. Finally, these PKS chains are transferred onto drimane sesquiterpenes by the acyltransferase drtE, forming the sesquiterpene esters. In addition to the different fatty acyl-CoA chains produced by drtA, drtE is also able to use cinnamoyl-CoA as a substrate. The sequence is that of Short-chain dehydrogenase/reductase drtF from Aspergillus calidoustus.